The primary structure comprises 434 residues: Histidinol dehydrogenase (434 aa).

NAD(+) contacts are provided by Tyr-130, Gln-188, and Asn-211. The substrate site is built by Ser-237, Gln-259, and His-262. Residues Gln-259 and His-262 each coordinate Zn(2+). Active-site proton acceptor residues include Glu-326 and His-327. Substrate-binding residues include His-327, Asp-360, Glu-414, and His-419. Asp-360 contacts Zn(2+). His-419 lines the Zn(2+) pocket.

Belongs to the histidinol dehydrogenase family. Homodimer. Zn(2+) serves as cofactor.

It catalyses the reaction L-histidinol + 2 NAD(+) + H2O = L-histidine + 2 NADH + 3 H(+). It functions in the pathway amino-acid biosynthesis; L-histidine biosynthesis; L-histidine from 5-phospho-alpha-D-ribose 1-diphosphate: step 9/9. Catalyzes the sequential NAD-dependent oxidations of L-histidinol to L-histidinaldehyde and then to L-histidine. This chain is Histidinol dehydrogenase, found in Shigella sonnei (strain Ss046).